The primary structure comprises 464 residues: 3-deoxy-D-manno-octulosonic acid transferase (464 aa).

A helical; Signal-anchor transmembrane segment spans residues 2-22 (MLLYYALSFILLPIYFIIILI). One can recognise an RPE1 insert domain in the interval 47-93 (YSLDFLHNEANKERFKGDTERRTAAYTSVREDSSTGSTSKLPLEASY). The active-site Proton acceptor is the Glu-107. Residues 311–312 (PR), 352–354 (FGE), and 377–380 (NILE) each bind CMP.

The protein belongs to the glycosyltransferase group 1 family.

It localises to the cell inner membrane. The catalysed reaction is lipid IVA (E. coli) + CMP-3-deoxy-beta-D-manno-octulosonate = alpha-Kdo-(2-&gt;6)-lipid IVA (E. coli) + CMP + H(+). It participates in bacterial outer membrane biogenesis; LPS core biosynthesis. Involved in lipopolysaccharide (LPS) biosynthesis. Catalyzes the transfer of 3-deoxy-D-manno-octulosonate (Kdo) residue(s) from CMP-Kdo to lipid IV(A), the tetraacyldisaccharide-1,4'-bisphosphate precursor of lipid A. The sequence is that of 3-deoxy-D-manno-octulosonic acid transferase (waaA) from Rickettsia felis (strain ATCC VR-1525 / URRWXCal2) (Rickettsia azadi).